Here is a 364-residue protein sequence, read N- to C-terminus: Protein L-Myc (364 aa).

Disordered regions lie at residues T41–G81, D111–V172, and P219–N285. Over residues A228–E245 the composition is skewed to basic and acidic residues. One can recognise a bHLH domain in the interval T281–L333. A leucine-zipper region spans residues L333–L361.

As to quaternary structure, efficient DNA binding requires dimerization with another bHLH protein. Binds DNA as a heterodimer with MAX.

Its subcellular location is the nucleus. This is Protein L-Myc (MYCL) from Homo sapiens (Human).